Consider the following 514-residue polypeptide: Transmembrane protein 117 (514 aa).

Topologically, residues 1-15 (MGKDFRYYFQHPWSR) are cytoplasmic. Residues 16–36 (MIVAYLVIFFNFLIFAEDPVS) traverse the membrane as a helical segment. At 37-65 (HSQTEANVIVVGNCFSFVTNKYPRGVGWR) the chain is on the extracellular side. The helical transmembrane segment at 66–86 (ILKVLLWLLAILTGLIAGKFL) threads the bilayer. Over 87–110 (FHQRLFGQLLRLKMFREDHGSWMT) the chain is Cytoplasmic. Residues 111 to 131 (MFFSTILFLFIFSHIYNTILL) traverse the membrane as a helical segment. The Extracellular portion of the chain corresponds to 132–154 (MDGNMGAYIITDYMGIRNESFMK). The chain crosses the membrane as a helical span at residues 155–175 (LAAVGTWMGDFVTAWMVTDMM). At 176-198 (LQDKPYPDWGKSARAFWKKGNVR) the chain is on the cytoplasmic side. A helical membrane pass occupies residues 199-219 (ITLFWTVLFTLTSVVVLVITT). The Extracellular segment spans residues 220–239 (DWISWDKLNRGFLPSDEVSR). A helical transmembrane segment spans residues 240-260 (AFLASFILVFDLLIVMQDWEF). The Cytoplasmic segment spans residues 261–295 (PHFMGDVDVNLPGLHTPHMQFKIPFFQKIFKEEYR). Residues 296–316 (IHITGKWFNYGIIFLVLILDL) form a helical membrane-spanning segment. Residues 317-394 (NMWKNQIFYK…FIGASLDVKC (78 aa)) lie on the Extracellular side of the membrane. Residues Asn-353 and Asn-371 are each glycosylated (N-linked (GlcNAc...) asparagine). A helical membrane pass occupies residues 395–415 (LAFVPSLIAFVWFGFFIWFFG). At 416–514 (RFLKNEPRME…PTTSKSTPTN (99 aa)) the chain is on the cytoplasmic side. 2 disordered regions span residues 429–459 (KTYTRMKRKSPSEHSKDMGITRENTQASVED) and 486–514 (ENLSSQLNESTSATEADQDPTTSKSTPTN). The span at 438-448 (SPSEHSKDMGI) shows a compositional bias: basic and acidic residues. Thr-453 carries the phosphothreonine modification.

This sequence belongs to the TMEM117 family.

It is found in the cell membrane. Its function is as follows. Involved in endoplasmic reticulum (ER) stress-induced cell death pathway. The sequence is that of Transmembrane protein 117 (TMEM117) from Homo sapiens (Human).